A 757-amino-acid polypeptide reads, in one-letter code: Transferrin receptor protein 1 (757 aa).

Residues 1–67 (MMDQARSAIS…KHRRLNGRLC (67 aa)) are Cytoplasmic-facing. The segment at 1 to 67 (MMDQARSAIS…KHRRLNGRLC (67 aa)) is mediates interaction with SH3BP4. Phosphoserine is present on residues serine 10 and serine 19. Position 20 is a phosphotyrosine (tyrosine 20). The short motif at 20 to 23 (YTRF) is the Endocytosis signal element. Position 21 is a phosphothreonine (threonine 21). Serine 24 carries the phosphoserine modification. The Stop-transfer sequence signature appears at 58–61 (KHRR). Cysteine 67 carries S-palmitoyl cysteine lipidation. A helical; Signal-anchor for type II membrane protein membrane pass occupies residues 68–88 (FGTIAVVIFFLIGFMIGYLGY). The Extracellular segment spans residues 89 to 757 (CKRTEQKDCV…GDIWDIDNEF (669 aa)). An O-linked (GalNAc...) threonine glycan is attached at threonine 103. Residues 220-310 (SKATTVSGKL…GTGDPYTPGF (91 aa)) enclose the PA domain. 2 N-linked (GlcNAc...) asparagine glycosylation sites follow: asparagine 248 and asparagine 314. Residues 566–757 (NLDTYEKLIQ…GDIWDIDNEF (192 aa)) are ligand-binding. The short motif at 643 to 645 (RGD) is the Cell attachment site element. N-linked (GlcNAc...) asparagine glycans are attached at residues asparagine 719 and asparagine 724.

It belongs to the peptidase M28 family. M28B subfamily. As to quaternary structure, homodimer; disulfide-linked. Binds one transferrin molecule per subunit. Interacts with SH3BP4. Interacts with STEAP3; facilitates TFRC endocytosis in erythroid precursor cells. Post-translationally, stearoylated by ZDHHC6 which inhibits TFRC-mediated activation of the JNK pathway and promotes mitochondrial fragmentation. Stearoylation does not affect iron uptake. N- and O-glycosylated, phosphorylated and palmitoylated.

Its subcellular location is the cell membrane. The protein localises to the melanosome. Its function is as follows. Cellular uptake of iron occurs via receptor-mediated endocytosis of ligand-occupied transferrin receptor into specialized endosomes. Endosomal acidification leads to iron release. The apotransferrin-receptor complex is then recycled to the cell surface with a return to neutral pH and the concomitant loss of affinity of apotransferrin for its receptor. Transferrin receptor is necessary for development of erythrocytes and the nervous system. Positively regulates T and B cell proliferation through iron uptake. Acts as a lipid sensor that regulates mitochondrial fusion by regulating activation of the JNK pathway. When dietary levels of stearate (C18:0) are low, promotes activation of the JNK pathway, resulting in HUWE1-mediated ubiquitination and subsequent degradation of the mitofusin MFN2 and inhibition of mitochondrial fusion. When dietary levels of stearate (C18:0) are high, TFRC stearoylation inhibits activation of the JNK pathway and thus degradation of the mitofusin MFN2. Mediates uptake of NICOL1 into fibroblasts where it may regulate extracellular matrix production. The protein is Transferrin receptor protein 1 (TFRC) of Cricetulus griseus (Chinese hamster).